The following is a 343-amino-acid chain: NAC domain-containing protein 4 (343 aa).

Residues 12-168 form the NAC domain; sequence LPPGFRFHPT…EWVLCRVFKK (157 aa). Residues 109 to 174 mediate DNA binding; sequence VGMKKTLVFY…VFKKSLVEVG (66 aa). The segment at 304 to 333 is disordered; that stretch reads GGERERLSASQDTGLTSDVNPEISSSSGQK. Polar residues predominate over residues 311-332; it reads SASQDTGLTSDVNPEISSSSGQ.

In terms of tissue distribution, expressed in roots, tiller buds, stems, leaves, lamina joints and the young husks. Expressed in embryos, coleoptiles, radicles, leaf pulvinus, ligules, panicles, palea and lemma, anthers, and the internode of the peduncles. Expressed in young leaves, root meristems, florescence meristems and young spikelets.

The protein resides in the nucleus. Functionally, transcription factor involved in the regulation of tiller bud outgrowth, but does not seem to regulate tiller bud initiation. Possesses transactivation activity in yeast. Involved in the regulation of plant architecture and grain yield. Acts as a negative regulator of plant height and flowering time. Regulates directly key genes of the gibberellin (GA) pathway by binding to their promoters. Positively regulates leaf senescence in an age-dependent manner. Activates directly the expression of the chlorophyll degradation genes SGR and NYC3. Positively regulates the level of abscisic acid (ABA) by directly up-regulating the expression of the ABA biosynthetic genes NCED3 and ZEP, and down-regulating the ABA catabolic gene CYP707A5/ABA8OX1. Promotes salt-induced cell death accompanied by the loss of plasma membrane integrity, nuclear DNA fragmentation, and changes of caspase-like activity. Targets genes that encoded a reactive oxygen species (ROS) scavenger COX11 and a caspase-like protease AP37. Activates the potassium efflux channels GORK and SKOR. Acts as a positive regulator of drought and salt tolerance through ABA-mediated pathways. Acts as a negative regulator of root growth. Functions as an upstream integrator of auxin and cytokinin signals that affect CROWN ROOTLESS (CRL) and cyclin-dependent protein kinase (CDK) genes to regulate cell division during root development. Binds directly to the promoters of the auxin inactivation-related genes GH3.6 and GH3.8, the auxin signaling-related gene ARF25, and the cytokinin oxidase gene CKX4. Activates directly the expressions of the 1-aminocyclopropane-1-carboxylate oxidase genes ACO1 and ACO3, enhancing ethylene synthesis, and then retarding seedling establishment. This chain is NAC domain-containing protein 4, found in Oryza sativa subsp. japonica (Rice).